The sequence spans 355 residues: 3-dehydroquinate synthase (355 aa).

NAD(+) contacts are provided by residues 67–72 (DGEIYK), 101–105 (GVIGD), 125–126 (TT), K138, K147, and 165–168 (FLNT). Residues E180, H243, and H260 each coordinate Zn(2+).

The protein belongs to the sugar phosphate cyclases superfamily. Dehydroquinate synthase family. The cofactor is NAD(+). It depends on Co(2+) as a cofactor. Requires Zn(2+) as cofactor.

It localises to the cytoplasm. The enzyme catalyses 7-phospho-2-dehydro-3-deoxy-D-arabino-heptonate = 3-dehydroquinate + phosphate. Its pathway is metabolic intermediate biosynthesis; chorismate biosynthesis; chorismate from D-erythrose 4-phosphate and phosphoenolpyruvate: step 2/7. In terms of biological role, catalyzes the conversion of 3-deoxy-D-arabino-heptulosonate 7-phosphate (DAHP) to dehydroquinate (DHQ). This chain is 3-dehydroquinate synthase, found in Buchnera aphidicola subsp. Baizongia pistaciae (strain Bp).